A 1596-amino-acid polypeptide reads, in one-letter code: Transcription factor Zelda (1596 aa).

Disordered stretches follow at residues 1-143, 209-273, and 490-530; these read MTSI…QQQQ, SGLG…GGAA, and TSPA…SVLP. Residues 13-24 show a composition bias toward low complexity; that stretch reads AAEALASSSATD. The segment covering 25–53 has biased composition (gly residues); sequence SGGGGAGGGGGGGGGGSGGPGAGGTGGVG. The span at 60-72 shows a compositional bias: polar residues; sequence NATISAAADSSDN. Low complexity-rich tracts occupy residues 73–123 and 226–267; these read QPGT…ITHQ and SAPS…QTPG. The span at 501 to 518 shows a compositional bias: gly residues; sequence GGPGQEGAAGAAPGGGYR. The C2H2-type 1 zinc-finger motif lies at 552–576; that stretch reads YNCTACNKWFTSSGHLKRHYNTTLH. 4 disordered regions span residues 578–813, 825–945, 1017–1074, and 1252–1322; these read NAVK…TTTA, EDSN…MGML, GEQH…MPLT, and QMQH…TTLP. Residues 610 to 634 are compositionally biased toward low complexity; the sequence is RGNAAAAAAAAAAAASASGQGQQQQ. The span at 635 to 653 shows a compositional bias: pro residues; sequence PPIPPPPANVPPPEPPRSP. Over residues 656-668 the composition is skewed to gly residues; the sequence is YGGGGGLGVGAMG. The segment covering 673-682 has biased composition (polar residues); sequence SQYSASPSPT. 2 stretches are compositionally biased toward low complexity: residues 683 to 709 and 719 to 753; these read QQQQ…GYGY and NASP…HHNS. Residues 768 to 781 are compositionally biased toward polar residues; it reads PHNNNTTQMPSSQM. Low complexity predominate over residues 796–813; it reads TTTRAPQITTTATTTTTA. Residues 830 to 840 show a composition bias toward basic residues; it reads THTHTHTHPNH. The span at 849–858 shows a compositional bias: low complexity; it reads SSSSSSSMAT. Residues 864–877 are compositionally biased toward basic and acidic residues; that stretch reads QELRDQEQADDHLH. Residues 879-916 show a composition bias toward low complexity; it reads HQQASQQYLLSARHYHSSTPNTLSSSNTNPSTPSSNSP. The tract at residues 904–1297 is transactivation activation domain (TAD); sequence SNTNPSTPSS…PLAKKRRGGN (394 aa). Polar residues predominate over residues 921–932; sequence RQEQQGTDFSRT. A compositionally biased stretch (pro residues) spans 933-944; sequence TPPPQPLPPMGM. Residues 1019-1036 are compositionally biased toward basic and acidic residues; the sequence is QHQRQEADHHQQQRELHQ. 2 stretches are compositionally biased toward low complexity: residues 1037 to 1062 and 1252 to 1275; these read LDQQ…SPTS and QMQH…QQQQ. 2 stretches are compositionally biased toward polar residues: residues 1276–1286 and 1309–1322; these read ILADQTQTMAQ and SSVG…TTLP. A C2H2-type 2 zinc finger spans residues 1326–1349; it reads IKCLECDKEFTKNCYLTQHNKSFH. Residues 1355 to 1378 form a C2H2-type 3; degenerate zinc finger; it reads FRCQKCGKRFQSEDVYTTHLGRHR. 2 consecutive C2H2-type zinc fingers follow at residues 1384 to 1407 and 1413 to 1435; these read HKCE…EAIH and HMCD…LETH.

In terms of tissue distribution, zygotically expressed in the developing embryonic germ layers, nervous system, imaginal disk primordia and in larval wing and eye disks. Detected in the germline cells of the ovary, in unfertilized eggs and throughout early development. Later, it becomes mostly restricted to the nervous system and specific head regions. Also expressed in imaginal wing disks in third instar larvae.

It is found in the nucleus. Its subcellular location is the chromosome. Functionally, transcription factor required for zygotic genome activation (ZGA), a critical event in early embryonic development during which the developmental control passes from maternally provided mRNAs to the expression of the zygotic genome after fertilization. Binds to regulatory DNA sequences containing a 5'-CAGGTAG-3' sequence motif, which are highly enriched among developmental enhancers. Within 1 hour into development, or by the embryo's 8th nuclear cycle, binds the majority of its motifs genome-wide. Zelda-binding promotes nucleosome depletion and chromatin accessibility, thereby facilitating the binding of patterning transcription factors, including the binding of the dorsoventral patterning transcription factors dorsal (dl) and twist (twi), and the anteroposterior patterning transcription factors bicoid (bcd) and caudal (cad). Promotes the activity of patterning transcription factors, such as bcd and dl, by lowering the concentration threshold required for transcriptional activation. Required both for the earliest (minor) and major waves of transcription during ZGA. Also involved in maternal mRNA clearance during the maternal-to-zygote transition by promoting expression of microRNAs (miRNAs), such as miR-1, miR-9a and miR-309, which mediate degradation of maternally-loaded RNAs. Also involved in post-blastoderm development: nvolved in nervous system development by maintaining neuroblasts in an undifferentiated state and equired for wing disk development. In terms of biological role, constitutes the main isoform expressed throughout development. Transcription factor required for zygotic genome activation (ZGA). Its function is as follows. Acts as a dominant negative inhibitor of transcription factor activity of isoform A. The sequence is that of Transcription factor Zelda from Drosophila melanogaster (Fruit fly).